The chain runs to 194 residues: Outer surface 22 kDa lipoprotein (194 aa).

The N-terminal stretch at 1-21 (MYKNGFFKNYLSLFLIFLVIA) is a signal peptide. Cys-22 carries N-palmitoyl cysteine lipidation. Residue Cys-22 is the site of S-diacylglycerol cysteine attachment.

The protein localises to the cell outer membrane. This Borreliella burgdorferi (strain ZS7) (Borrelia burgdorferi) protein is Outer surface 22 kDa lipoprotein (p22).